We begin with the raw amino-acid sequence, 900 residues long: Probable dipeptidyl-aminopeptidase B (900 aa).

The tract at residues 1-83 is disordered; the sequence is MARTDQGLGA…DILSHPRDKS (83 aa). At 1–90 the chain is on the cytoplasmic side; sequence MARTDQGLGA…DKSKRSRGSR (90 aa). Residues 24-39 are compositionally biased toward low complexity; that stretch reads NSFSSTDSLSTDGSLF. Polar residues predominate over residues 44 to 55; the sequence is NATQFQKSTQLP. Residues 91–111 form a helical; Signal-anchor for type II membrane protein membrane-spanning segment; that stretch reads WIWVIGLLCLGGWILAFILFW. Over 112-900 the chain is Vacuolar; it reads GRRNNNSDIS…HHVGSALAAT (789 aa). N-linked (GlcNAc...) asparagine glycans are attached at residues Asn150, Asn195, Asn348, Asn410, Asn514, Asn639, and Asn644. Ser753 acts as the Charge relay system in catalysis. N-linked (GlcNAc...) asparagine glycosylation occurs at Asn812. Residues Asp830 and His863 each act as charge relay system in the active site.

The protein belongs to the peptidase S9B family.

Its subcellular location is the vacuole membrane. It catalyses the reaction Release of an N-terminal dipeptide, Xaa-Yaa-|-Zaa-, from a polypeptide, preferentially when Yaa is Pro, provided Zaa is neither Pro nor hydroxyproline.. Type IV dipeptidyl-peptidase which removes N-terminal dipeptides sequentially from polypeptides having unsubstituted N-termini provided that the penultimate residue is proline. The sequence is that of Probable dipeptidyl-aminopeptidase B (dapB) from Talaromyces stipitatus (strain ATCC 10500 / CBS 375.48 / QM 6759 / NRRL 1006) (Penicillium stipitatum).